A 264-amino-acid chain; its full sequence is S-adenosylmethionine decarboxylase proenzyme (264 aa).

Residue S113 is the Schiff-base intermediate with substrate; via pyruvic acid of the active site. S113 is subject to Pyruvic acid (Ser); by autocatalysis. H118 (proton acceptor; for processing activity) is an active-site residue. The active-site Proton donor; for catalytic activity is C141.

Belongs to the prokaryotic AdoMetDC family. Type 2 subfamily. Heterooctamer of four alpha and four beta chains arranged as a tetramer of alpha/beta heterodimers. It depends on pyruvate as a cofactor. In terms of processing, is synthesized initially as an inactive proenzyme. Formation of the active enzyme involves a self-maturation process in which the active site pyruvoyl group is generated from an internal serine residue via an autocatalytic post-translational modification. Two non-identical subunits are generated from the proenzyme in this reaction, and the pyruvate is formed at the N-terminus of the alpha chain, which is derived from the carboxyl end of the proenzyme. The post-translation cleavage follows an unusual pathway, termed non-hydrolytic serinolysis, in which the side chain hydroxyl group of the serine supplies its oxygen atom to form the C-terminus of the beta chain, while the remainder of the serine residue undergoes an oxidative deamination to produce ammonia and the pyruvoyl group blocking the N-terminus of the alpha chain.

It carries out the reaction S-adenosyl-L-methionine + H(+) = S-adenosyl 3-(methylsulfanyl)propylamine + CO2. The protein operates within amine and polyamine biosynthesis; S-adenosylmethioninamine biosynthesis; S-adenosylmethioninamine from S-adenosyl-L-methionine: step 1/1. Functionally, catalyzes the decarboxylation of S-adenosylmethionine to S-adenosylmethioninamine (dcAdoMet), the propylamine donor required for the synthesis of the polyamines spermine and spermidine from the diamine putrescine. The chain is S-adenosylmethionine decarboxylase proenzyme from Xanthomonas campestris pv. campestris (strain B100).